The primary structure comprises 77 residues: MISKEKIARINELAKKAKSGSLTDEEKAEQQKLRQEYLQGVRASMKNTLKTVTIVDPEGNDVTPEKLKQEKRNRRLH.

Positions 57 to 77 (PEGNDVTPEKLKQEKRNRRLH) are disordered.

The protein belongs to the UPF0291 family.

Its subcellular location is the cytoplasm. The sequence is that of UPF0291 protein BLi02035/BL02933 from Bacillus licheniformis (strain ATCC 14580 / DSM 13 / JCM 2505 / CCUG 7422 / NBRC 12200 / NCIMB 9375 / NCTC 10341 / NRRL NRS-1264 / Gibson 46).